The following is a 266-amino-acid chain: Tryptophan synthase alpha chain (266 aa).

Residues E45 and D56 each act as proton acceptor in the active site.

This sequence belongs to the TrpA family. In terms of assembly, tetramer of two alpha and two beta chains.

It carries out the reaction (1S,2R)-1-C-(indol-3-yl)glycerol 3-phosphate + L-serine = D-glyceraldehyde 3-phosphate + L-tryptophan + H2O. The protein operates within amino-acid biosynthesis; L-tryptophan biosynthesis; L-tryptophan from chorismate: step 5/5. The alpha subunit is responsible for the aldol cleavage of indoleglycerol phosphate to indole and glyceraldehyde 3-phosphate. This chain is Tryptophan synthase alpha chain, found in Novosphingobium aromaticivorans (strain ATCC 700278 / DSM 12444 / CCUG 56034 / CIP 105152 / NBRC 16084 / F199).